We begin with the raw amino-acid sequence, 326 residues long: Vacuolar protein sorting-associated protein 26A (326 aa).

The protein belongs to the VPS26 family. Component of the heterotrimeric retromer cargo-selective complex (CSC) which is believed to associate with variable sorting nexins to form functionally distinct retromer complex variants.

The protein localises to the cytoplasm. Its subcellular location is the endosome membrane. The protein resides in the early endosome. In terms of biological role, acts as a component of the retromer cargo-selective complex (CSC). The CSC is believed to be the core functional component of retromer or respective retromer complex variants acting to prevent missorting of selected transmembrane cargo proteins into the lysosomal degradation pathway. Retromer mediates retrograde transport of cargo proteins from endosomes to the trans-Golgi network (TGN). In Xenopus tropicalis (Western clawed frog), this protein is Vacuolar protein sorting-associated protein 26A (vps26a).